The sequence spans 661 residues: MRGTQGAQEMKPELWPEPKPTSENLTSRGSGSYEKVLPSIPAACHTSSSSVCPRRKPRPRPQPRSRSRGGRGLKAPPPPPAKPPPPPPAPPPPPLPKQRSVAWRNSRRRSRPGPRPQTRKSYSSDHGSSRDSDGSENSLLEVGSNKGPTGCCHVESFKVAKNWQRNLRMIYQRFIWSGTPETRKRKAKSCICQICSTHKNRLHSCLSCVFFGCFTDKHIHIHAETTQHNLAVDLCHGVIYCFMCRDYVYDKDIEKIAKETKEKILGLLSSPTGDASYQQLMASEVEENQLTCESKDQETSLVKPKKKRRKKTMYYTVGFRGLINLGNTCFMNCIVQVLTHIPLLKEFFLSNKHKCMMTSPSLCLVCEMSLLFQAMYSGNQSPHIPYKLLHLIWIHAEHLAGYRQQDAQEFLIAILDVLHRHSRDDGIDQEGNSNCCNCIIDHIFTGSLQSDLTCQVCHGVSTTIDPCWDISLDLPGPYTPGRASSSTSSRDGQKPRVISLTDCLKWFTRPEDLGSSAKIKCSQCQSYQESTKQLTMKKLPIVACFHLKRFEHLGKQRRKINSFISFPLELDMTPFLASTKESIMKGQPLTECVPSENKYSLFAVINHHGTLESGHYTSFVRQEKDQWFSCDDAVVTKATMEELLNSEGYLLFYHRQDIEKE.

The tract at residues 1–144 (MRGTQGAQEM…SENSLLEVGS (144 aa)) is disordered. Positions 21-30 (TSENLTSRGS) are enriched in polar residues. A compositionally biased stretch (basic residues) spans 53–71 (PRRKPRPRPQPRSRSRGGR). Over residues 75 to 96 (APPPPPAKPPPPPPAPPPPPLP) the composition is skewed to pro residues. The UBP-type zinc-finger motif lies at 149 to 267 (TGCCHVESFK…KETKEKILGL (119 aa)). Positions 151, 153, 192, 195, 205, 208, 213, 218, 222, 228, 241, and 244 each coordinate Zn(2+). The 337-residue stretch at 320–656 (RGLINLGNTC…EGYLLFYHRQ (337 aa)) folds into the USP domain. Catalysis depends on Cys-329, which acts as the Nucleophile. Catalysis depends on His-615, which acts as the Proton acceptor.

The protein belongs to the peptidase C19 family. As to quaternary structure, interacts with H2A.

It localises to the chromosome. The enzyme catalyses Thiol-dependent hydrolysis of ester, thioester, amide, peptide and isopeptide bonds formed by the C-terminal Gly of ubiquitin (a 76-residue protein attached to proteins as an intracellular targeting signal).. Specifically deubiquitinates 'Lys-14' (H2AK13Ub) and 'Lys-16'(H2AK15Ub) of histone H2A regulating the DNA damage response at double-strand breaks (DSBs). USP51 is recruited to chromatin after DNA damage and regulates the dynamic assembly/disassembly of TP53BP1 and BRCA1. Functions in DNA double-strand break repair also by mediating the deubiquitination and subsequent stabilization of DGCR8, leading to the recruitment of DGCR8 binding partners to double strand breaks such as RNF168 or MDC1. In addition, promotes the deubiquitination and stabilization of the transcriptional repressor ZEB1. The chain is Ubiquitin carboxyl-terminal hydrolase 51 from Mus musculus (Mouse).